The sequence spans 192 residues: Ion-translocating oxidoreductase complex subunit B (192 aa).

The segment at 1 to 26 is hydrophobic; that stretch reads MNAIWIAVVAVSLLGLAFGAILGYAS. One can recognise a 4Fe-4S domain in the interval 32–91; it reads EDDPVVEKIDEILPQSQCGQCGYPGCRPYAEAIGSQGEKINRCAPGGEAVMLKIATLLNV. C49, C52, C57, C74, C117, C120, C123, C127, C147, C150, C153, and C157 together coordinate [4Fe-4S] cluster. 2 consecutive 4Fe-4S ferredoxin-type domains span residues 108 to 137 and 138 to 167; these read MLAVIDENNCIGCTKCIQACPVDAIVGATR and AMHTVMSDLCTGCNLCVDPCPTQCIELRPV.

The protein belongs to the 4Fe4S bacterial-type ferredoxin family. RnfB subfamily. In terms of assembly, the complex is composed of six subunits: RnfA, RnfB, RnfC, RnfD, RnfE and RnfG. Requires [4Fe-4S] cluster as cofactor.

It is found in the cell inner membrane. Part of a membrane-bound complex that couples electron transfer with translocation of ions across the membrane. This chain is Ion-translocating oxidoreductase complex subunit B, found in Citrobacter koseri (strain ATCC BAA-895 / CDC 4225-83 / SGSC4696).